The sequence spans 29 residues: ATP synthase subunit 9, mitochondrial (29 aa).

It belongs to the ATPase C chain family. As to quaternary structure, F-type ATPases have 2 components, CF(1) - the catalytic core - and CF(0) - the membrane proton channel. CF(1) has five subunits: alpha(3), beta(3), gamma(1), delta(1), epsilon(1). CF(0) has three main subunits: a, b and c.

It localises to the mitochondrion membrane. Functionally, mitochondrial membrane ATP synthase (F(1)F(0) ATP synthase or Complex V) produces ATP from ADP in the presence of a proton gradient across the membrane which is generated by electron transport complexes of the respiratory chain. F-type ATPases consist of two structural domains, F(1) - containing the extramembraneous catalytic core and F(0) - containing the membrane proton channel, linked together by a central stalk and a peripheral stalk. During catalysis, ATP synthesis in the catalytic domain of F(1) is coupled via a rotary mechanism of the central stalk subunits to proton translocation. Part of the complex F(0) domain. A homomeric c-ring of probably 10 subunits is part of the complex rotary element. In Wickerhamomyces pijperi (Yeast), this protein is ATP synthase subunit 9, mitochondrial (ATP9).